Consider the following 438-residue polypeptide: MADARGSSSSSGDGGGGEGKGGAGHGDFVGGGQHNWYHGILGAVPPPNVGRQNIVHHQYPAASLIQQHHQSPTMPLPMAQLPYVPQYTVLPTPAVLPSHHHHHGQSQISQENFQDWVPSNNVAAPHVPSAFQDWRQMCNGSAFMPFGQTAANSNVFYQNLTFNSWTSNNMPRNPVYTSFHPAAIEDHHAPLFHSNNHDIDPGFQTNFRMDQAFVPASSPFPPVSSSSHSFSSAKISNGPTYTKKAKKSNVKDPPIVFRRSDMESEKNDDNPDQTPVSEPPSMNQNGENLIIRFNCREYRVILRKELTNSDVGNIGRIVMPKRDAEAHLPALHQREGVTLKMDDFKFETTWNFKYRFWPNNKSRMYVLESTGGFVKHHGLQTGDIFIIYKSSESGKFVVRGEKAIKPNAIMPVVDCSCKNELNKSEECGFTISLQTKKT.

The span at 1-11 (MADARGSSSSS) shows a compositional bias: low complexity. Disordered regions lie at residues 1–30 (MADA…DFVG) and 225–285 (SSSH…MNQN). The segment covering 12-30 (GDGGGGEGKGGAGHGDFVG) has biased composition (gly residues). The span at 258–269 (RRSDMESEKNDD) shows a compositional bias: basic and acidic residues. Polar residues predominate over residues 272-285 (DQTPVSEPPSMNQN). Positions 302–404 (LRKELTNSDV…KFVVRGEKAI (103 aa)) form a DNA-binding region, TF-B3.

The protein resides in the nucleus. This is Putative B3 domain-containing protein Os04g0676650 from Oryza sativa subsp. japonica (Rice).